A 355-amino-acid polypeptide reads, in one-letter code: Cobalt-precorrin-5B C(1)-methyltransferase (355 aa).

This sequence belongs to the CbiD family.

It catalyses the reaction Co-precorrin-5B + S-adenosyl-L-methionine = Co-precorrin-6A + S-adenosyl-L-homocysteine. The protein operates within cofactor biosynthesis; adenosylcobalamin biosynthesis; cob(II)yrinate a,c-diamide from sirohydrochlorin (anaerobic route): step 6/10. In terms of biological role, catalyzes the methylation of C-1 in cobalt-precorrin-5B to form cobalt-precorrin-6A. This Parasynechococcus marenigrum (strain WH8102) protein is Cobalt-precorrin-5B C(1)-methyltransferase.